The primary structure comprises 105 residues: Nucleoid-associated protein OCAR_7544/OCA5_c05960 (105 aa).

The protein belongs to the YbaB/EbfC family. Homodimer.

It localises to the cytoplasm. It is found in the nucleoid. Its function is as follows. Binds to DNA and alters its conformation. May be involved in regulation of gene expression, nucleoid organization and DNA protection. The protein is Nucleoid-associated protein OCAR_7544/OCA5_c05960 of Afipia carboxidovorans (strain ATCC 49405 / DSM 1227 / KCTC 32145 / OM5) (Oligotropha carboxidovorans).